A 188-amino-acid polypeptide reads, in one-letter code: Pyridoxal 5'-phosphate synthase subunit PdxT (188 aa).

L-glutamine is bound at residue 47–49; that stretch reads GES. Cys-79 functions as the Nucleophile in the catalytic mechanism. L-glutamine-binding positions include Arg-105 and 134–135; that span reads IR. Residues His-170 and Glu-172 each act as charge relay system in the active site.

This sequence belongs to the glutaminase PdxT/SNO family. In the presence of PdxS, forms a dodecamer of heterodimers. Only shows activity in the heterodimer.

The enzyme catalyses aldehydo-D-ribose 5-phosphate + D-glyceraldehyde 3-phosphate + L-glutamine = pyridoxal 5'-phosphate + L-glutamate + phosphate + 3 H2O + H(+). The catalysed reaction is L-glutamine + H2O = L-glutamate + NH4(+). The protein operates within cofactor biosynthesis; pyridoxal 5'-phosphate biosynthesis. Functionally, catalyzes the hydrolysis of glutamine to glutamate and ammonia as part of the biosynthesis of pyridoxal 5'-phosphate. The resulting ammonia molecule is channeled to the active site of PdxS. This chain is Pyridoxal 5'-phosphate synthase subunit PdxT, found in Listeria monocytogenes serovar 1/2a (strain ATCC BAA-679 / EGD-e).